The sequence spans 72 residues: Aurein-2.5 (72 aa).

Residues Met1 to Cys22 form the signal peptide. Residues Glu23–Arg49 constitute a propeptide that is removed on maturation. The disordered stretch occupies residues Arg27 to Glu47. Residues Ala38–Glu47 are compositionally biased toward basic and acidic residues. Leu65 is subject to Leucine amide. The propeptide occupies Asn69–Glu72.

This sequence belongs to the frog skin active peptide (FSAP) family. Aurein subfamily. May be monomeric or may oligomerize as homodimers or homotrimers in Gram-positive and Gram-negative bacteria mimetic membranes. In terms of processing, C-terminal amidation enhances antibacterial activity. This increase may be due to stabilization of the alpha-helical structure at the membrane interface. In terms of tissue distribution, expressed by the skin dorsal glands.

It is found in the secreted. It localises to the target cell membrane. Functionally, amphipathic alpha-helical antimicrobial peptide with moderate to potent activity against Gram-positive bacteria, Gram-negative bacteria and fungi. Also shows a weak activity against biofilm of both Gram-positive and Gram-negative bacteria. Probably acts by disturbing membrane functions with its amphipathic structure. Kills fungi via membranolytic action. Enhanced sterol levels in lipid composition membranes reduce interaction of this peptide with membranes, having a protective effect against the lytic ability of the peptide. Shows anticancer activity. The polypeptide is Aurein-2.5 (Ranoidea aurea (Green and golden bell frog)).